The sequence spans 252 residues: 3-dehydroquinate dehydratase (252 aa).

3-dehydroquinate contacts are provided by residues Ser-21, 46 to 48 (EWR), and Arg-82. The Proton donor/acceptor role is filled by His-143. Residue Lys-170 is the Schiff-base intermediate with substrate of the active site. Residues Arg-213, Ser-232, and Gln-236 each contribute to the 3-dehydroquinate site.

The protein belongs to the type-I 3-dehydroquinase family. In terms of assembly, homodimer.

The catalysed reaction is 3-dehydroquinate = 3-dehydroshikimate + H2O. The protein operates within metabolic intermediate biosynthesis; chorismate biosynthesis; chorismate from D-erythrose 4-phosphate and phosphoenolpyruvate: step 3/7. Its function is as follows. Involved in the third step of the chorismate pathway, which leads to the biosynthesis of aromatic amino acids. Catalyzes the cis-dehydration of 3-dehydroquinate (DHQ) and introduces the first double bond of the aromatic ring to yield 3-dehydroshikimate. This chain is 3-dehydroquinate dehydratase, found in Salmonella agona (strain SL483).